The sequence spans 467 residues: 3-isopropylmalate dehydratase large subunit (467 aa).

Residues cysteine 347, cysteine 408, and cysteine 411 each coordinate [4Fe-4S] cluster.

It belongs to the aconitase/IPM isomerase family. LeuC type 1 subfamily. Heterodimer of LeuC and LeuD. It depends on [4Fe-4S] cluster as a cofactor.

The catalysed reaction is (2R,3S)-3-isopropylmalate = (2S)-2-isopropylmalate. Its pathway is amino-acid biosynthesis; L-leucine biosynthesis; L-leucine from 3-methyl-2-oxobutanoate: step 2/4. Its function is as follows. Catalyzes the isomerization between 2-isopropylmalate and 3-isopropylmalate, via the formation of 2-isopropylmaleate. The protein is 3-isopropylmalate dehydratase large subunit of Bordetella bronchiseptica (strain ATCC BAA-588 / NCTC 13252 / RB50) (Alcaligenes bronchisepticus).